The following is a 193-amino-acid chain: Probable nicotinate-nucleotide adenylyltransferase (193 aa).

The protein belongs to the NadD family.

The enzyme catalyses nicotinate beta-D-ribonucleotide + ATP + H(+) = deamido-NAD(+) + diphosphate. It participates in cofactor biosynthesis; NAD(+) biosynthesis; deamido-NAD(+) from nicotinate D-ribonucleotide: step 1/1. Its function is as follows. Catalyzes the reversible adenylation of nicotinate mononucleotide (NaMN) to nicotinic acid adenine dinucleotide (NaAD). This is Probable nicotinate-nucleotide adenylyltransferase from Borreliella afzelii (strain PKo) (Borrelia afzelii).